The sequence spans 558 residues: WW domain-containing adapter protein with coiled-coil (558 aa).

Disordered regions lie at residues 1-129 (MVMY…WSEH), 159-244 (QRQK…SPAP), and 321-461 (VAQQ…APGR). The segment covering 22-32 (QPYQTLKYSSK) has biased composition (polar residues). Composition is skewed to basic and acidic residues over residues 33-46 (SHPD…RDSN) and 56-70 (RRSD…DNTG). Basic residues predominate over residues 72 to 82 (GRAKAIHPHRG). The span at 99 to 116 (NHSSLHSSNSHSNPNKSS) shows a compositional bias: low complexity. A WW domain is found at 120 to 153 (FEPADDWSEHISSSGKKYYYNCRTEVSQWEKPKE). A compositionally biased stretch (basic and acidic residues) spans 175-184 (PKDRDYRREA). The segment covering 188–200 (TPASYSSTKSSIA) has biased composition (polar residues). A compositionally biased stretch (low complexity) spans 204-217 (PSSLTPSSSSAAVS). 2 stretches are compositionally biased toward polar residues: residues 223 to 234 (NSASSASGSTVP) and 321 to 378 (VAQQ…MTVK). Low complexity predominate over residues 402-431 (SPRTLQRQSSQRSPSPGPNHMGSNSSSSSN). The span at 432-443 (NGGGGGGQGPGV) shows a compositional bias: gly residues. Positions 529 to 555 (QATLREQRILFLRQQIKELEKLKNQNS) form a coiled coil.

It is found in the nucleus. Acts as a linker between gene transcription and histone H2B monoubiquitination at 'Lys-120' (H2BK120ub1). Positive regulator of amino acid starvation-induced autophagy. Positively regulates MTOR activity. May negatively regulate the ubiquitin proteasome pathway. This is WW domain-containing adapter protein with coiled-coil (waca) from Danio rerio (Zebrafish).